The sequence spans 116 residues: Large ribosomal subunit protein uL22c (116 aa).

Belongs to the universal ribosomal protein uL22 family. As to quaternary structure, part of the 50S ribosomal subunit.

It localises to the plastid. The protein localises to the chloroplast. This protein binds specifically to 23S rRNA. Its function is as follows. The globular domain of the protein is located near the polypeptide exit tunnel on the outside of the subunit, while an extended beta-hairpin is found that lines the wall of the exit tunnel in the center of the 70S ribosome. The protein is Large ribosomal subunit protein uL22c (rpl22) of Porphyra purpurea (Red seaweed).